We begin with the raw amino-acid sequence, 352 residues long: MKEQLNQLSAYQPGLSPRALKEKYGIEGDLYKLASNENLYGPSPKVKEAISAHLDELYYYPETGSPTLKAAISKHLNVDQSRILFGAGLDEVILMISRAVLTPGDTIVTSEATFGQYYHNAIVESANVIQVPLKDGGFDLEGILKEVNEDTSLVWLCNPNNPTGTYFNHESLDSFLSQVPPHVPVIIDEAYFEFVTAEDYPDTLALQQKYDNAFLLRTFSKAYGLAGLRVGYVVASEHAIEKWNIIRPPFNVTRISEYAAVAALEDQQYLKEVTHKNSVERERFYQLPQSEYFLPSQTNFIFVKTKRVNELYEALLNVGCITRPFPTGVRITIGFKEQNDKMLEVLSNFKYE.

Position 221 is an N6-(pyridoxal phosphate)lysine (K221).

The protein belongs to the class-II pyridoxal-phosphate-dependent aminotransferase family. Histidinol-phosphate aminotransferase subfamily. Homodimer. Pyridoxal 5'-phosphate is required as a cofactor.

It catalyses the reaction L-histidinol phosphate + 2-oxoglutarate = 3-(imidazol-4-yl)-2-oxopropyl phosphate + L-glutamate. The protein operates within amino-acid biosynthesis; L-histidine biosynthesis; L-histidine from 5-phospho-alpha-D-ribose 1-diphosphate: step 7/9. This is Histidinol-phosphate aminotransferase from Staphylococcus aureus (strain Mu3 / ATCC 700698).